A 544-amino-acid chain; its full sequence is Protein anon-37Cs (544 aa).

The protein localises to the cytoplasm. Its function is as follows. Has a non-vital function. The polypeptide is Protein anon-37Cs (anon-37Cs) (Drosophila lebanonensis (Fruit fly)).